We begin with the raw amino-acid sequence, 304 residues long: Acetyl-coenzyme A carboxylase carboxyl transferase subunit beta (304 aa).

Residues Leu25–Glu294 form the CoA carboxyltransferase N-terminal domain.

Belongs to the AccD/PCCB family. In terms of assembly, acetyl-CoA carboxylase is a heterohexamer composed of biotin carboxyl carrier protein (AccB), biotin carboxylase (AccC) and two subunits each of ACCase subunit alpha (AccA) and ACCase subunit beta (AccD).

The protein resides in the cytoplasm. It carries out the reaction N(6)-carboxybiotinyl-L-lysyl-[protein] + acetyl-CoA = N(6)-biotinyl-L-lysyl-[protein] + malonyl-CoA. It functions in the pathway lipid metabolism; malonyl-CoA biosynthesis; malonyl-CoA from acetyl-CoA: step 1/1. In terms of biological role, component of the acetyl coenzyme A carboxylase (ACC) complex. Biotin carboxylase (BC) catalyzes the carboxylation of biotin on its carrier protein (BCCP) and then the CO(2) group is transferred by the transcarboxylase to acetyl-CoA to form malonyl-CoA. The protein is Acetyl-coenzyme A carboxylase carboxyl transferase subunit beta of Sinorhizobium medicae (strain WSM419) (Ensifer medicae).